Reading from the N-terminus, the 257-residue chain is Phosphate import ATP-binding protein PstB (257 aa).

Positions 11–252 (IQVRDLNFYY…PAKKQTEDYI (242 aa)) constitute an ABC transporter domain. 43–50 (GPSGCGKS) lines the ATP pocket.

It belongs to the ABC transporter superfamily. Phosphate importer (TC 3.A.1.7) family. As to quaternary structure, the complex is composed of two ATP-binding proteins (PstB), two transmembrane proteins (PstC and PstA) and a solute-binding protein (PstS).

The protein localises to the cell inner membrane. The enzyme catalyses phosphate(out) + ATP + H2O = ADP + 2 phosphate(in) + H(+). Functionally, part of the ABC transporter complex PstSACB involved in phosphate import. Responsible for energy coupling to the transport system. The polypeptide is Phosphate import ATP-binding protein PstB (Enterobacter cloacae).